The chain runs to 117 residues: Large ribosomal subunit protein bL20 (117 aa).

This sequence belongs to the bacterial ribosomal protein bL20 family.

Binds directly to 23S ribosomal RNA and is necessary for the in vitro assembly process of the 50S ribosomal subunit. It is not involved in the protein synthesizing functions of that subunit. This Campylobacter jejuni subsp. jejuni serotype O:6 (strain 81116 / NCTC 11828) protein is Large ribosomal subunit protein bL20.